We begin with the raw amino-acid sequence, 390 residues long: Pyruvate dehydrogenase E1 component subunit alpha-1, mitochondrial (390 aa).

A mitochondrion-targeting transit peptide spans 1–15; sequence MAAAILLRRVPPARA. Residues histidine 91, tyrosine 117, arginine 118, glycine 166, valine 168, aspartate 197, glycine 198, alanine 199, asparagine 226, and tyrosine 228 each contribute to the pyruvate site. Residues tyrosine 117, arginine 118, glycine 166, valine 168, aspartate 197, glycine 198, alanine 199, and asparagine 226 each coordinate thiamine diphosphate. Position 197 (aspartate 197) interacts with Mg(2+). Residues asparagine 226 and tyrosine 228 each contribute to the Mg(2+) site. Histidine 292 serves as a coordination point for thiamine diphosphate. The disordered stretch occupies residues 293–312; the sequence is SMSDPGSTYRTRDEISGVRQ. Residues 302-312 show a composition bias toward basic and acidic residues; the sequence is RTRDEISGVRQ.

In terms of assembly, tetramer of 2 alpha and 2 beta subunits. Thiamine diphosphate is required as a cofactor. The cofactor is Mg(2+).

The protein resides in the mitochondrion matrix. It carries out the reaction N(6)-[(R)-lipoyl]-L-lysyl-[protein] + pyruvate + H(+) = N(6)-[(R)-S(8)-acetyldihydrolipoyl]-L-lysyl-[protein] + CO2. Functionally, the pyruvate dehydrogenase complex catalyzes the overall conversion of pyruvate to acetyl-CoA and CO(2). It contains multiple copies of three enzymatic components: pyruvate dehydrogenase (E1), dihydrolipoamide acetyltransferase (E2) and lipoamide dehydrogenase (E3). The polypeptide is Pyruvate dehydrogenase E1 component subunit alpha-1, mitochondrial (Oryza sativa subsp. japonica (Rice)).